The chain runs to 554 residues: Arginine--tRNA ligase (554 aa).

The 'HIGH' region signature appears at 132 to 142; that stretch reads ANPTGPIHLGG.

The protein belongs to the class-I aminoacyl-tRNA synthetase family. As to quaternary structure, monomer.

The protein localises to the cytoplasm. It catalyses the reaction tRNA(Arg) + L-arginine + ATP = L-arginyl-tRNA(Arg) + AMP + diphosphate. The chain is Arginine--tRNA ligase from Clavibacter sepedonicus (Clavibacter michiganensis subsp. sepedonicus).